Consider the following 505-residue polypeptide: 2,3-bisphosphoglycerate-independent phosphoglycerate mutase (505 aa).

Residues Asp12 and Ser62 each coordinate Mn(2+). Catalysis depends on Ser62, which acts as the Phosphoserine intermediate. Residues His123, 153–154, Arg185, Arg191, 257–260, and Lys330 contribute to the substrate site; these read RD and RPDR. The Mn(2+) site is built by Asp397, His401, Asp438, His439, and His456.

Belongs to the BPG-independent phosphoglycerate mutase family. Monomer. It depends on Mn(2+) as a cofactor.

The catalysed reaction is (2R)-2-phosphoglycerate = (2R)-3-phosphoglycerate. The protein operates within carbohydrate degradation; glycolysis; pyruvate from D-glyceraldehyde 3-phosphate: step 3/5. Catalyzes the interconversion of 2-phosphoglycerate and 3-phosphoglycerate. This is 2,3-bisphosphoglycerate-independent phosphoglycerate mutase from Staphylococcus aureus (strain Mu50 / ATCC 700699).